The primary structure comprises 76 residues: Acyl carrier protein (76 aa).

Residues 1 to 76 form the Carrier domain; the sequence is MATFDDVKDV…AAVDYIDNNQ (76 aa). Serine 36 bears the O-(pantetheine 4'-phosphoryl)serine mark.

It belongs to the acyl carrier protein (ACP) family. Post-translationally, 4'-phosphopantetheine is transferred from CoA to a specific serine of apo-ACP by AcpS. This modification is essential for activity because fatty acids are bound in thioester linkage to the sulfhydryl of the prosthetic group.

Its subcellular location is the cytoplasm. It participates in lipid metabolism; fatty acid biosynthesis. Carrier of the growing fatty acid chain in fatty acid biosynthesis. The sequence is that of Acyl carrier protein from Deinococcus radiodurans (strain ATCC 13939 / DSM 20539 / JCM 16871 / CCUG 27074 / LMG 4051 / NBRC 15346 / NCIMB 9279 / VKM B-1422 / R1).